The primary structure comprises 287 residues: Aspartate dehydrogenase domain-containing protein (287 aa).

2 positions are modified to phosphoserine: S24 and S172.

The protein belongs to the L-aspartate dehydrogenase family.

This chain is Aspartate dehydrogenase domain-containing protein, found in Mus musculus (Mouse).